Here is a 444-residue protein sequence, read N- to C-terminus: Glutamate--tRNA ligase 1 (444 aa).

A 'HIGH' region motif is present at residues 10–20 (PSPTGRLHLGN). Residues 241–245 (GLSKR) carry the 'KMSKS' region motif. Lys244 lines the ATP pocket.

The protein belongs to the class-I aminoacyl-tRNA synthetase family. Glutamate--tRNA ligase type 1 subfamily. Monomer.

It is found in the cytoplasm. The enzyme catalyses tRNA(Glu) + L-glutamate + ATP = L-glutamyl-tRNA(Glu) + AMP + diphosphate. Functionally, catalyzes the attachment of glutamate to tRNA(Glu) in a two-step reaction: glutamate is first activated by ATP to form Glu-AMP and then transferred to the acceptor end of tRNA(Glu). The protein is Glutamate--tRNA ligase 1 of Rhodospirillum rubrum (strain ATCC 11170 / ATH 1.1.1 / DSM 467 / LMG 4362 / NCIMB 8255 / S1).